A 365-amino-acid polypeptide reads, in one-letter code: Transcription factor KUA1 (365 aa).

A disordered region spans residues 1 to 21 (MTRRCSHCNHNGHNSRTCPNR). The CCHC-type zinc-finger motif lies at 3–20 (RRCSHCNHNGHNSRTCPN). The segment covering 8–18 (CNHNGHNSRTC) has biased composition (polar residues). The R/KLFGV (transcriptional repression) motif lies at 24-28 (KLFGV). Residues 41-99 (MGNLSHYTGSGSGGHGTGSNTPGSPGDVPDHVAGDGYASEDFVAGSSSSRERKKGTPWT) form a disordered region. The 57-residue stretch at 90–146 (RERKKGTPWTEEEHRMFLLGLQKLGKGDWRGISRNYVTTRTPTQVASHAQKYFIRQS) folds into the HTH myb-type domain. Positions 118-142 (WRGISRNYVTTRTPTQVASHAQKYF) form a DNA-binding region, H-T-H motif. Disordered regions lie at residues 214-254 (SMDS…QPQL) and 321-365 (ESNK…IHAL). The span at 220-254 (STTGEPTATAAAASSSSRLEETTQLQSQLQPQPQL) shows a compositional bias: low complexity. Residues 343-355 (RQSAFHPNPSSDS) show a composition bias toward polar residues.

Expressed ubiquitously, except in hypocotyls, root tips and lateral root primordia.

It localises to the nucleus. In terms of biological role, transcriptional repressor. Direct regulator of the transcription of peroxidase (Prxs) and reactive oxygen species (ROS)-related genes via the recognition of 5'-ATCACA-3' motif. Binds to 5'-TATCCA-3' motif (TA box) and represses the activity of corresponding promoters (e.g. sugar response genes). Regulates hypocotyl elongation in response to darkness by enhancing auxin accumulation in a phytochrome-interacting factor (PIF) proteins-dependent manner. Promotes lateral roots formation. Promotes cell expansion during leaves development via the modulation of cell wall-located Prxs. Plays a critical role in developmentally regulated and dark-induced onset of leaf senescence by repressing the transcription of several genes involved in chloroplast function and responses to light and auxin. Promotes responses to auxin, abscisic acid (ABA), and ethylene. The chain is Transcription factor KUA1 from Arabidopsis thaliana (Mouse-ear cress).